Consider the following 229-residue polypeptide: MEKLTTLTGVAVPLRRSNVDTDQIIPAVFLKRVKKSGFDDALFYAWRRDPEFVLNKPEYKQGKILVAGPDFGIGSSREHAVWALHDYGFRVVISSRFADIFYGNTAKNGVLAAIMPQESIELLWKLLDEEPGREMTVSLEDRTVTCGDVTLPFEVNDYTRWRLMNGYDDIDLTLQHEDDIIAYEKMRAEKFPFKPKTLPVKREPEQPIESAREGEYPDWQGPLADRGII.

Residues 198–229 (LPVKREPEQPIESAREGEYPDWQGPLADRGII) form a disordered region. Residues 200–215 (VKREPEQPIESAREGE) show a composition bias toward basic and acidic residues.

Belongs to the LeuD family. LeuD type 1 subfamily. As to quaternary structure, heterodimer of LeuC and LeuD.

It carries out the reaction (2R,3S)-3-isopropylmalate = (2S)-2-isopropylmalate. It participates in amino-acid biosynthesis; L-leucine biosynthesis; L-leucine from 3-methyl-2-oxobutanoate: step 2/4. Functionally, catalyzes the isomerization between 2-isopropylmalate and 3-isopropylmalate, via the formation of 2-isopropylmaleate. The polypeptide is 3-isopropylmalate dehydratase small subunit (Bifidobacterium adolescentis (strain ATCC 15703 / DSM 20083 / NCTC 11814 / E194a)).